The following is a 440-amino-acid chain: Chromosome partition protein MukF (440 aa).

The interval 208-236 (LSETSGTLRELQDTLEAAGDKLQANLLRI) is leucine-zipper.

This sequence belongs to the MukF family. Interacts, and probably forms a ternary complex, with MukE and MukB via its C-terminal region. The complex formation is stimulated by calcium or magnesium. It is required for an interaction between MukE and MukB.

It is found in the cytoplasm. It localises to the nucleoid. In terms of biological role, involved in chromosome condensation, segregation and cell cycle progression. May participate in facilitating chromosome segregation by condensation DNA from both sides of a centrally located replisome during cell division. Not required for mini-F plasmid partitioning. Probably acts via its interaction with MukB and MukE. Overexpression results in anucleate cells. It has a calcium binding activity. This chain is Chromosome partition protein MukF, found in Salmonella arizonae (strain ATCC BAA-731 / CDC346-86 / RSK2980).